The following is a 117-amino-acid chain: DNA-binding protein VNG_2008H (117 aa).

The disordered stretch occupies residues methionine 1–arginine 59. Residues glutamate 11–leucine 21 show a composition bias toward basic and acidic residues. Positions glutamine 35–alanine 48 are enriched in low complexity.

It belongs to the PDCD5 family.

In Halobacterium salinarum (strain ATCC 700922 / JCM 11081 / NRC-1) (Halobacterium halobium), this protein is DNA-binding protein VNG_2008H.